The sequence spans 466 residues: Soluble pyridine nucleotide transhydrogenase (466 aa).

An FAD-binding site is contributed by 36-45; it reads EKESSVGGGC.

It belongs to the class-I pyridine nucleotide-disulfide oxidoreductase family. The cofactor is FAD.

The protein resides in the cytoplasm. It carries out the reaction NAD(+) + NADPH = NADH + NADP(+). Functionally, conversion of NADPH, generated by peripheral catabolic pathways, to NADH, which can enter the respiratory chain for energy generation. The protein is Soluble pyridine nucleotide transhydrogenase of Vibrio parahaemolyticus serotype O3:K6 (strain RIMD 2210633).